Reading from the N-terminus, the 261-residue chain is Na(+)-translocating NADH-quinone reductase subunit C (261 aa).

A helical transmembrane segment spans residues 11–31; sequence LLVALVVCLVSSVFVAGAAVA. Thr-230 carries the post-translational modification FMN phosphoryl threonine.

The protein belongs to the NqrC family. Composed of six subunits; NqrA, NqrB, NqrC, NqrD, NqrE and NqrF. The cofactor is FMN.

It localises to the cell inner membrane. The enzyme catalyses a ubiquinone + n Na(+)(in) + NADH + H(+) = a ubiquinol + n Na(+)(out) + NAD(+). Its function is as follows. NQR complex catalyzes the reduction of ubiquinone-1 to ubiquinol by two successive reactions, coupled with the transport of Na(+) ions from the cytoplasm to the periplasm. NqrA to NqrE are probably involved in the second step, the conversion of ubisemiquinone to ubiquinol. This chain is Na(+)-translocating NADH-quinone reductase subunit C, found in Pseudomonas aeruginosa (strain ATCC 15692 / DSM 22644 / CIP 104116 / JCM 14847 / LMG 12228 / 1C / PRS 101 / PAO1).